The sequence spans 131 residues: Steroid Delta-isomerase (131 aa).

Tyrosine 16 functions as the Proton donor in the catalytic mechanism. The active-site Proton acceptor is the aspartate 40. Position 103 (aspartate 103) interacts with substrate.

In terms of assembly, homodimer.

It carries out the reaction a 3-oxo-Delta(5)-steroid = a 3-oxo-Delta(4)-steroid. This chain is Steroid Delta-isomerase (ksi), found in Pseudomonas putida (Arthrobacter siderocapsulatus).